A 340-amino-acid polypeptide reads, in one-letter code: tRNA-cytidine(32) 2-sulfurtransferase (340 aa).

The short motif at 74–79 (SGGKDS) is the PP-loop motif element. [4Fe-4S] cluster contacts are provided by Cys149, Cys152, and Cys240.

The protein belongs to the TtcA family. As to quaternary structure, homodimer. It depends on Mg(2+) as a cofactor. Requires [4Fe-4S] cluster as cofactor.

Its subcellular location is the cytoplasm. It catalyses the reaction cytidine(32) in tRNA + S-sulfanyl-L-cysteinyl-[cysteine desulfurase] + AH2 + ATP = 2-thiocytidine(32) in tRNA + L-cysteinyl-[cysteine desulfurase] + A + AMP + diphosphate + H(+). It functions in the pathway tRNA modification. Catalyzes the ATP-dependent 2-thiolation of cytidine in position 32 of tRNA, to form 2-thiocytidine (s(2)C32). The sulfur atoms are provided by the cysteine/cysteine desulfurase (IscS) system. This chain is tRNA-cytidine(32) 2-sulfurtransferase, found in Burkholderia ambifaria (strain MC40-6).